The chain runs to 166 residues: Large ribosomal subunit protein uL10 (166 aa).

The protein belongs to the universal ribosomal protein uL10 family. Part of the ribosomal stalk of the 50S ribosomal subunit. The N-terminus interacts with L11 and the large rRNA to form the base of the stalk. The C-terminus forms an elongated spine to which L12 dimers bind in a sequential fashion forming a multimeric L10(L12)X complex.

In terms of biological role, forms part of the ribosomal stalk, playing a central role in the interaction of the ribosome with GTP-bound translation factors. In Flavobacterium psychrophilum (strain ATCC 49511 / DSM 21280 / CIP 103535 / JIP02/86), this protein is Large ribosomal subunit protein uL10.